We begin with the raw amino-acid sequence, 426 residues long: Glutamate-1-semialdehyde 2,1-aminomutase (426 aa).

The residue at position 265 (lysine 265) is an N6-(pyridoxal phosphate)lysine.

The protein belongs to the class-III pyridoxal-phosphate-dependent aminotransferase family. HemL subfamily. In terms of assembly, homodimer. Pyridoxal 5'-phosphate is required as a cofactor.

The protein resides in the cytoplasm. It carries out the reaction (S)-4-amino-5-oxopentanoate = 5-aminolevulinate. The protein operates within porphyrin-containing compound metabolism; protoporphyrin-IX biosynthesis; 5-aminolevulinate from L-glutamyl-tRNA(Glu): step 2/2. The polypeptide is Glutamate-1-semialdehyde 2,1-aminomutase (Escherichia coli O139:H28 (strain E24377A / ETEC)).